A 2591-amino-acid chain; its full sequence is Eukaryotic translation initiation factor 2-alpha kinase PK4 (2591 aa).

The Cytoplasmic portion of the chain corresponds to 1–16; it reads MYNKGINICLNEDNKC. The helical transmembrane segment at 17–37 threads the bilayer; sequence IILLHIIFNKCIVSFVASHIL. Over 38 to 1488 the chain is Lumenal; the sequence is VEGKICFLNR…EFSSQKHKKS (1451 aa). Residues 1028–1048 form a disordered region; that stretch reads KKKRNSKKGENRNKKRKTQKR. A helical membrane pass occupies residues 1489 to 1509; that stretch reads WYWNIFYAITLVIVIPFIFIY. At 1510-2591 the chain is on the cytoplasmic side; it reads RLFKKQTNNK…NIINGNEVDH (1082 aa). Residues 1781–1840 are disordered; it reads NLNSADEENKSPYAKKYSDEKKNRSKSSKYIENTQSNNNDNTNGNMNVGNHINNDKMNNK. Residues 1813–1832 show a composition bias toward low complexity; it reads NTQSNNNDNTNGNMNVGNHI. Residues 1880–1888 and Lys1905 contribute to the ATP site; that span reads IGQGGFGSV. Disordered regions lie at residues 2123–2157 and 2183–2212; these read DNDESNGSGHSKKNDNDERKSLNNQNGIYNTGGDI and IKNTQGTSINGTINRNTISDETGTQGTNNN. The span at 2134 to 2143 shows a compositional bias: basic and acidic residues; sequence KKNDNDERKS. The region spanning 2181–2532 is the Protein kinase domain; that stretch reads MTIKNTQGTS…KIKVLLDPHL (352 aa). Asp2369 (proton acceptor) is an active-site residue. Thr2436 carries the phosphothreonine; by autocatalysis modification. A compositionally biased stretch (polar residues) spans 2558–2574; sequence STNPNGDIKENVNQNNL. Positions 2558 to 2591 are disordered; sequence STNPNGDIKENVNQNNLVDDKGNNNIINGNEVDH. A compositionally biased stretch (low complexity) spans 2580-2591; that stretch reads NNNIINGNEVDH.

This sequence belongs to the protein kinase superfamily. Ser/Thr protein kinase family. GCN2 subfamily. May form oligomers in response to stress; oligomerization may result in catalytic activity. Interacts with BIP; the interaction is disrupted in response to stress.

It localises to the endoplasmic reticulum membrane. It carries out the reaction L-seryl-[protein] + ATP = O-phospho-L-seryl-[protein] + ADP + H(+). It catalyses the reaction L-threonyl-[protein] + ATP = O-phospho-L-threonyl-[protein] + ADP + H(+). With respect to regulation, dissociation from BIP and oligomerization, may results autophosphorylation and kinase activity induction. In terms of biological role, during the asexual blood stage, phosphorylates translation factor eIF2alpha in late schizonts resulting in protein translation inhibition. Plays a role in trophozoite differentiation into schizonts. The polypeptide is Eukaryotic translation initiation factor 2-alpha kinase PK4 (Plasmodium berghei (strain Anka)).